The chain runs to 630 residues: Triacylglycerol lipase ptl2 (630 aa).

The PNPLA domain occupies 251 to 442 (LCLSGGASFA…RTDIPLSELR (192 aa)). The GXSXG signature appears at 282-286 (GTSGG). The active-site Nucleophile is serine 284. The Proton acceptor role is filled by aspartate 429.

It belongs to the PLPL family.

Its subcellular location is the lipid droplet. The enzyme catalyses a triacylglycerol + H2O = a diacylglycerol + a fatty acid + H(+). Its function is as follows. Lipid particle-localized triacylglycerol (TAG) lipase. The lipid droplet/particle is a lipid storage compartment which serves as a depot of energy and building blocks for membrane lipid biosynthesis. Involved in the mobilization of the non-polar storage lipids triacylglycerols (TAGs) from lipid particles by hydrolysis of TAGs, releasing and supplying specific fatty acids to the appropriate metabolic pathways. This chain is Triacylglycerol lipase ptl2 (ptl2), found in Schizosaccharomyces pombe (strain 972 / ATCC 24843) (Fission yeast).